A 185-amino-acid polypeptide reads, in one-letter code: Auxin-responsive protein IAA34 (185 aa).

The EAR-like (transcriptional repression) motif lies at 63-67; that stretch reads LGLSL. A PB1 domain is found at 92-180; sequence WGYVKVTMDG…ERLRITRRND (89 aa).

It belongs to the Aux/IAA family. Homodimers and heterodimers.

The protein resides in the nucleus. Aux/IAA proteins are short-lived transcriptional factors that function as repressors of early auxin response genes at low auxin concentrations. Repression is thought to result from the interaction with auxin response factors (ARFs), proteins that bind to the auxin-responsive promoter element (AuxRE). Formation of heterodimers with ARF proteins may alter their ability to modulate early auxin response genes expression. In Arabidopsis thaliana (Mouse-ear cress), this protein is Auxin-responsive protein IAA34 (IAA34).